The sequence spans 97 residues: Putative pterin-4-alpha-carbinolamine dehydratase (97 aa).

This sequence belongs to the pterin-4-alpha-carbinolamine dehydratase family.

It catalyses the reaction (4aS,6R)-4a-hydroxy-L-erythro-5,6,7,8-tetrahydrobiopterin = (6R)-L-erythro-6,7-dihydrobiopterin + H2O. The sequence is that of Putative pterin-4-alpha-carbinolamine dehydratase from Opitutus terrae (strain DSM 11246 / JCM 15787 / PB90-1).